Consider the following 218-residue polypeptide: Large ribosomal subunit protein uL4 (218 aa).

Positions 54-106 (GTHAVKNRGAVSGGGRKPWKQKGTGRARQGSIRAPQWYHGGVAHGPVPRDYSQ) are disordered.

This sequence belongs to the universal ribosomal protein uL4 family. As to quaternary structure, part of the 50S ribosomal subunit.

Functionally, one of the primary rRNA binding proteins, this protein initially binds near the 5'-end of the 23S rRNA. It is important during the early stages of 50S assembly. It makes multiple contacts with different domains of the 23S rRNA in the assembled 50S subunit and ribosome. Forms part of the polypeptide exit tunnel. This Bifidobacterium animalis subsp. lactis (strain AD011) protein is Large ribosomal subunit protein uL4.